We begin with the raw amino-acid sequence, 439 residues long: Chromosomal replication initiator protein DnaA (439 aa).

Residues 1–75 (MESWSRCLER…GIREVVLAIG (75 aa)) form a domain I, interacts with DnaA modulators region. A domain II region spans residues 75-101 (GSRPKTTELTVPVDTTGRLSQTVPFNG). The domain III, AAA+ region stretch occupies residues 102 to 319 (NLDTHYNFDN…GALNTLVARA (218 aa)). Positions 147, 149, 150, and 151 each coordinate ATP. The interval 320 to 439 (NFTGRAVTIE…WDKLMRKFSE (120 aa)) is domain IV, binds dsDNA.

This sequence belongs to the DnaA family. Oligomerizes as a right-handed, spiral filament on DNA at oriC.

It is found in the cytoplasm. Its function is as follows. Plays an essential role in the initiation and regulation of chromosomal replication. ATP-DnaA binds to the origin of replication (oriC) to initiate formation of the DNA replication initiation complex once per cell cycle. Binds the DnaA box (a 9 base pair repeat at the origin) and separates the double-stranded (ds)DNA. Forms a right-handed helical filament on oriC DNA; dsDNA binds to the exterior of the filament while single-stranded (ss)DNA is stabiized in the filament's interior. The ATP-DnaA-oriC complex binds and stabilizes one strand of the AT-rich DNA unwinding element (DUE), permitting loading of DNA polymerase. After initiation quickly degrades to an ADP-DnaA complex that is not apt for DNA replication. Binds acidic phospholipids. This Xylella fastidiosa (strain Temecula1 / ATCC 700964) protein is Chromosomal replication initiator protein DnaA.